Consider the following 120-residue polypeptide: PYEKIGAELVKEVAKKTDDVAGDGTTTATVLAQALVKEGLRNVAAGANPLSLKRGIEKAVEKVTETLLKSAKEVETKEQIAATAAISAGDQSIGDLIAEAMDKVGNEGVITVEESNTFGL.

23-27 (DGTTT) serves as a coordination point for ATP.

The protein belongs to the chaperonin (HSP60) family. In terms of assembly, forms a cylinder of 14 subunits composed of two heptameric rings stacked back-to-back. Interacts with the co-chaperonin GroES.

The protein resides in the cytoplasm. It catalyses the reaction ATP + H2O + a folded polypeptide = ADP + phosphate + an unfolded polypeptide.. Its function is as follows. Together with its co-chaperonin GroES, plays an essential role in assisting protein folding. The GroEL-GroES system forms a nano-cage that allows encapsulation of the non-native substrate proteins and provides a physical environment optimized to promote and accelerate protein folding. The sequence is that of Chaperonin GroEL from Mycobacterium malmoense.